A 587-amino-acid polypeptide reads, in one-letter code: Glutaconyl-CoA decarboxylase subunit alpha (587 aa).

The region spanning 31–298 (LKKIEEEIHQ…YDPEFFRVDD (268 aa)) is the CoA carboxyltransferase N-terminal domain. The segment at 31–558 (LKKIEEEIHQ…RGYVEAFTEA (528 aa)) is carboxyltransferase. Residues 295–558 (RVDDPKAPAF…RGYVEAFTEA (264 aa)) form the CoA carboxyltransferase C-terminal domain.

Heterooctamer consisting of two alpha, two beta, two gamma and two delta subunits.

The enzyme catalyses (2E)-glutaconyl-CoA + Na(+)(in) + H(+) = (2E)-butenoyl-CoA + Na(+)(out) + CO2. Its pathway is amino-acid degradation; L-glutamate degradation via hydroxyglutarate pathway; crotonoyl-CoA from L-glutamate: step 5/5. In terms of biological role, decarboxylase subunit of the primary sodium pump glutaconyl-CoA decarboxylase (GCD). The sequence is that of Glutaconyl-CoA decarboxylase subunit alpha (gcdA) from Acidaminococcus fermentans (strain ATCC 25085 / DSM 20731 / CCUG 9996 / CIP 106432 / VR4).